Here is a 239-residue protein sequence, read N- to C-terminus: Lipoprotein-releasing system ATP-binding protein LolD (239 aa).

The region spanning 14-239 (IRAERLGKTY…KLRELAPSAV (226 aa)) is the ABC transporter domain. 50–57 (GASGAGKS) is a binding site for ATP.

This sequence belongs to the ABC transporter superfamily. Lipoprotein translocase (TC 3.A.1.125) family. The complex is composed of two ATP-binding proteins (LolD) and two transmembrane proteins (LolC and LolE).

The protein resides in the cell inner membrane. Functionally, part of the ABC transporter complex LolCDE involved in the translocation of mature outer membrane-directed lipoproteins, from the inner membrane to the periplasmic chaperone, LolA. Responsible for the formation of the LolA-lipoprotein complex in an ATP-dependent manner. This chain is Lipoprotein-releasing system ATP-binding protein LolD, found in Xanthomonas campestris pv. campestris (strain 8004).